The following is a 460-amino-acid chain: Gastric inhibitory polypeptide receptor (460 aa).

An N-terminal signal peptide occupies residues 1–18 (MPLRLLLLLLWLWGLQWA). The Extracellular segment spans residues 19 to 134 (ETDSEGQTTT…DQTLILERLQ (116 aa)). 3 cysteine pairs are disulfide-bonded: Cys-42–Cys-66, Cys-57–Cys-99, and Cys-80–Cys-114. N-linked (GlcNAc...) asparagine glycosylation is found at Asn-58, Asn-68, and Asn-73. A helical membrane pass occupies residues 135–155 (IMYTVGYSLSLTTLLLALLIL). Over 156 to 166 (SLFRRLHCTRN) the chain is Cytoplasmic. A helical membrane pass occupies residues 167-185 (YIHMNLFTSFMLRAAAILT). Residues 186–222 (RDQLLPPLGPYTGDQAPTPWNQALAACRTAQIMTQYC) are Extracellular-facing. Residues 223-243 (VGANYTWLLVEGVYLHHLLVI) form a helical membrane-spanning segment. Over 244 to 255 (VGRSEKGHFRCY) the chain is Cytoplasmic. Residues 256–276 (LLLGWGAPALFVIPWVIVRYL) traverse the membrane as a helical segment. The Extracellular portion of the chain corresponds to 277–297 (RENTQCWERNEVKAIWWIIRT). The chain crosses the membrane as a helical span at residues 298–318 (PILITILINFLIFIRILGILV). At 319–337 (SKLRTRQMRCPDYRLRLAR) the chain is on the cytoplasmic side. A helical transmembrane segment spans residues 338 to 358 (STLTLVPLLGVHEVVFAPVTE). At 359–370 (EQVEGSLRFAKL) the chain is on the extracellular side. The chain crosses the membrane as a helical span at residues 371 to 391 (AFEIFLSSFQGFLVSVLYCFI). Residues 392-460 (NKEVQSEIRQ…PGDEVLESYC (69 aa)) lie on the Cytoplasmic side of the membrane.

It belongs to the G-protein coupled receptor 2 family. May form homodimers and heterodimers with GLP1R. Post-translationally, N-glycosylation is required for cell surface expression and lengthens receptor half-life by preventing degradation in the ER.

It is found in the cell membrane. This is a receptor for GIP. The activity of this receptor is mediated by G proteins which activate adenylyl cyclase. This Mus musculus (Mouse) protein is Gastric inhibitory polypeptide receptor (Gipr).